Consider the following 308-residue polypeptide: Porphobilinogen deaminase (308 aa).

An S-(dipyrrolylmethanemethyl)cysteine modification is found at cysteine 241.

It belongs to the HMBS family. Monomer. It depends on dipyrromethane as a cofactor.

The enzyme catalyses 4 porphobilinogen + H2O = hydroxymethylbilane + 4 NH4(+). Its pathway is porphyrin-containing compound metabolism; protoporphyrin-IX biosynthesis; coproporphyrinogen-III from 5-aminolevulinate: step 2/4. Functionally, tetrapolymerization of the monopyrrole PBG into the hydroxymethylbilane pre-uroporphyrinogen in several discrete steps. This chain is Porphobilinogen deaminase, found in Staphylococcus aureus (strain Newman).